A 377-amino-acid chain; its full sequence is MTSHVMPTAERKVRVDLAERSYDILIGPGLIAAAGKEIASRLKGRKMAVITDENVAPRYLEPLMASLGESGIEAVSLILPAGEKTKSFEHLIPVCEAILGARIERNDAVIALGGGVIGDLTGFAAGIVRRGSRFIQIPTSLLAQVDSSVGGKTGINSAHGKNLIGVFHQPDLVLADTAALDTLSPREFRAGYAEVAKYGLIDKPEFFEWLEKNWQAVFAGGPARIEAIAVSCQAKADVVAADERENGRRALLNLGHTFGHALEAATDYDSKRLVHGEGVAIGMVLAHEFSARMNLASPDDARRVEAHLKTVGLPTRLADIPGALPPADRLMEAIAQDKKVKGGKLTFILTRGIGQSFVADDVPSSEVLSFLTEKHPR.

Residues 115-119 (GVIGD), 139-140 (TS), Lys152, and Lys161 contribute to the NAD(+) site. 3 residues coordinate Zn(2+): Glu194, His256, and His275.

The protein belongs to the sugar phosphate cyclases superfamily. Dehydroquinate synthase family. Requires NAD(+) as cofactor. The cofactor is Co(2+). Zn(2+) serves as cofactor.

It is found in the cytoplasm. It catalyses the reaction 7-phospho-2-dehydro-3-deoxy-D-arabino-heptonate = 3-dehydroquinate + phosphate. The protein operates within metabolic intermediate biosynthesis; chorismate biosynthesis; chorismate from D-erythrose 4-phosphate and phosphoenolpyruvate: step 2/7. Its function is as follows. Catalyzes the conversion of 3-deoxy-D-arabino-heptulosonate 7-phosphate (DAHP) to dehydroquinate (DHQ). The chain is 3-dehydroquinate synthase from Rhizobium meliloti (strain 1021) (Ensifer meliloti).